Here is a 359-residue protein sequence, read N- to C-terminus: Cytohesin-interacting protein (359 aa).

Residues 77-166 form the PDZ domain; the sequence is VVTVEKQDNG…LLTIETLNGT (90 aa). Residues 165–188 are a coiled coil; the sequence is GTMIHRRAELEAKLQTLKQTLKKK. The tract at residues 166-188 is interaction with CYTH1; the sequence is TMIHRRAELEAKLQTLKQTLKKK.

Interacts with CYTH1 and SNX27.

It localises to the cytoplasm. The protein localises to the early endosome. In terms of biological role, by its binding to cytohesin-1 (CYTH1), it modifies activation of ARFs by CYTH1 and its precise function may be to sequester CYTH1 in the cytoplasm. This is Cytohesin-interacting protein (Cytip) from Mus musculus (Mouse).